The following is a 561-amino-acid chain: Putative transport protein ASA_2308 (561 aa).

A run of 5 helical transmembrane segments spans residues 8–28 (LLHQSDSLLLFVVLAFGLLLG), 37–57 (IGNTIGVLFTALLFGQMGFEF), 66–86 (FMLFIFCVGIEAGPHFFSVFL), 90–110 (IHYITLTLVILLTALLLTVGL), and 161–181 (NMGIGYALTYLVGLVGLMLVV). RCK C-terminal domains follow at residues 206-291 (SDNE…NYRN) and 293-376 (KEVF…KIGF). Helical transmembrane passes span 386-406 (LVAFTTFFVLGLLIGSVSLVF), 409-429 (LEFGLGNAVGLLLAGILMGYL), 450-470 (LGLAVFMVSTGLKAGGGILDH), 476-496 (AVVLFSGMLVTTLPVLVGYLF), and 541-561 (TYAVANVMLTLAGSFIIGFWF).

It belongs to the AAE transporter (TC 2.A.81) family. YbjL subfamily.

Its subcellular location is the cell membrane. The chain is Putative transport protein ASA_2308 from Aeromonas salmonicida (strain A449).